We begin with the raw amino-acid sequence, 392 residues long: BURP domain protein RD22 (392 aa).

The first 22 residues, 1–22 (MAIRLPLICLLGSFMVVAIAAD), serve as a signal peptide directing secretion. TXV repeat units lie at residues 56–58 (TNV), 78–80 (TAV), 100–102 (THV), and 125–127 (TDV). Positions 57-164 (NVQVGKGGVN…PFVYNYAAKE (108 aa)) are 5 X approximate repeats. Residues 61 to 136 (GKGGVNVNTH…VGVGKGGVTV (76 aa)) form a disordered region. Positions 94–114 (GKPGGGTHVSVGSGKGHGGGV) are enriched in gly residues. One can recognise a BURP domain in the interval 176 to 392 (FFLEKDLVRG…PETHVVWFSY (217 aa)).

In terms of tissue distribution, expressed in seed. Highest expression in leaves and guard cells.

In terms of biological role, acts to suppress chlorophyll degradation under moisture stress. This Arabidopsis thaliana (Mouse-ear cress) protein is BURP domain protein RD22.